The primary structure comprises 198 residues: V-type ATP synthase subunit E (198 aa).

It belongs to the V-ATPase E subunit family.

Functionally, produces ATP from ADP in the presence of a proton gradient across the membrane. In Acetivibrio thermocellus (strain ATCC 27405 / DSM 1237 / JCM 9322 / NBRC 103400 / NCIMB 10682 / NRRL B-4536 / VPI 7372) (Clostridium thermocellum), this protein is V-type ATP synthase subunit E.